Reading from the N-terminus, the 274-residue chain is NAD-dependent protein deacetylase (274 aa).

In terms of domain architecture, Deacetylase sirtuin-type spans 1–274; the sequence is MDSRMSDLQA…CDEVLAEVVS (274 aa). NAD(+)-binding positions include 26-46 and 104-107; these read GAGC…GQWK and QNVD. The active-site Proton acceptor is the H122. Zn(2+) contacts are provided by C130, C133, C181, and C184. NAD(+) is bound by residues 221 to 223, 247 to 249, and C265; these read GSS and NLG.

It belongs to the sirtuin family. Class II subfamily. Zn(2+) serves as cofactor.

It localises to the cytoplasm. It carries out the reaction N(6)-acetyl-L-lysyl-[protein] + NAD(+) + H2O = 2''-O-acetyl-ADP-D-ribose + nicotinamide + L-lysyl-[protein]. Functionally, NAD-dependent protein deacetylase which modulates the activities of several enzymes which are inactive in their acetylated form. In Bordetella bronchiseptica (strain ATCC BAA-588 / NCTC 13252 / RB50) (Alcaligenes bronchisepticus), this protein is NAD-dependent protein deacetylase.